We begin with the raw amino-acid sequence, 512 residues long: tRNA modification GTPase gtpbp3, mitochondrial (512 aa).

The 189-residue stretch at 246–434 (GANIAIVGPP…LLNLLKLNLK (189 aa)) folds into the TrmE-type G domain. Residues 253-260 (GPPNAGKS), 300-304 (DTAGL), and 375-378 (NKSD) contribute to the GTP site.

It belongs to the TRAFAC class TrmE-Era-EngA-EngB-Septin-like GTPase superfamily. TrmE GTPase family.

It localises to the mitochondrion. GTPase involved in the 5-carboxymethylaminomethyl modification (mnm(5)s(2)U34) of the wobble uridine base in mitochondrial tRNAs. The chain is tRNA modification GTPase gtpbp3, mitochondrial (gtpbp3) from Dictyostelium discoideum (Social amoeba).